Here is a 353-residue protein sequence, read N- to C-terminus: Anthranilate phosphoribosyltransferase (353 aa).

Residues Gly87, 90–91 (GD), Thr95, 97–100 (NIST), 115–123 (KHGNRAASS), and Thr127 each bind 5-phospho-alpha-D-ribose 1-diphosphate. Gly87 contributes to the anthranilate binding site. Ser99 serves as a coordination point for Mg(2+). Asn118 provides a ligand contact to anthranilate. Arg173 provides a ligand contact to anthranilate. Mg(2+) is bound by residues Asp231 and Glu232.

Belongs to the anthranilate phosphoribosyltransferase family. As to quaternary structure, homodimer. Mg(2+) is required as a cofactor.

The catalysed reaction is N-(5-phospho-beta-D-ribosyl)anthranilate + diphosphate = 5-phospho-alpha-D-ribose 1-diphosphate + anthranilate. The protein operates within amino-acid biosynthesis; L-tryptophan biosynthesis; L-tryptophan from chorismate: step 2/5. Functionally, catalyzes the transfer of the phosphoribosyl group of 5-phosphorylribose-1-pyrophosphate (PRPP) to anthranilate to yield N-(5'-phosphoribosyl)-anthranilate (PRA). The polypeptide is Anthranilate phosphoribosyltransferase (Salinispora arenicola (strain CNS-205)).